A 357-amino-acid chain; its full sequence is Chorismate synthase (357 aa).

Arginine 47 is an NADP(+) binding site. FMN-binding positions include 123-125 (RAS), glycine 281, 296-300 (KPTSS), and arginine 324.

This sequence belongs to the chorismate synthase family. In terms of assembly, homotetramer. It depends on FMNH2 as a cofactor.

It carries out the reaction 5-O-(1-carboxyvinyl)-3-phosphoshikimate = chorismate + phosphate. It participates in metabolic intermediate biosynthesis; chorismate biosynthesis; chorismate from D-erythrose 4-phosphate and phosphoenolpyruvate: step 7/7. Catalyzes the anti-1,4-elimination of the C-3 phosphate and the C-6 proR hydrogen from 5-enolpyruvylshikimate-3-phosphate (EPSP) to yield chorismate, which is the branch point compound that serves as the starting substrate for the three terminal pathways of aromatic amino acid biosynthesis. This reaction introduces a second double bond into the aromatic ring system. The protein is Chorismate synthase of Chlamydia trachomatis serovar D (strain ATCC VR-885 / DSM 19411 / UW-3/Cx).